A 475-amino-acid chain; its full sequence is AP-1 complex subunit mu-1-I (475 aa).

An MHD domain is found at 175 to 473 (KNEAFLDIVE…TQSGDDYTIR (299 aa)). The disordered stretch occupies residues 240 to 262 (ASATTSDNNTETDKKPSITSSSA).

The protein belongs to the adaptor complexes medium subunit family. As to quaternary structure, adaptor protein complex 1 (AP-1) is a heterotetramer composed of two large adaptins (gamma-type subunit APL4 and beta-type subunit APL2), a medium adaptin (mu-type subunit APM1) and a small adaptin (sigma-type subunit APS1). AP-1 interacts with clathrin.

It is found in the cytoplasmic vesicle. It localises to the clathrin-coated vesicle membrane. The protein resides in the membrane. The protein localises to the clathrin-coated pit. Functionally, component of the adaptor complexes which link clathrin to receptors in coated vesicles. Clathrin-associated protein complexes are believed to interact with the cytoplasmic tails of membrane proteins, leading to their selection and concentration. The AP-1 complex interacts directly with clathrin. AP57 is probably a subunit of the Golgi membrane adaptor. The sequence is that of AP-1 complex subunit mu-1-I (APM1) from Saccharomyces cerevisiae (strain ATCC 204508 / S288c) (Baker's yeast).